Consider the following 357-residue polypeptide: Histidinol-phosphate aminotransferase (357 aa).

N6-(pyridoxal phosphate)lysine is present on Lys-212.

Belongs to the class-II pyridoxal-phosphate-dependent aminotransferase family. Histidinol-phosphate aminotransferase subfamily. As to quaternary structure, homodimer. Pyridoxal 5'-phosphate serves as cofactor.

It catalyses the reaction L-histidinol phosphate + 2-oxoglutarate = 3-(imidazol-4-yl)-2-oxopropyl phosphate + L-glutamate. The protein operates within amino-acid biosynthesis; L-histidine biosynthesis; L-histidine from 5-phospho-alpha-D-ribose 1-diphosphate: step 7/9. This chain is Histidinol-phosphate aminotransferase, found in Pectobacterium carotovorum subsp. carotovorum (strain PC1).